A 404-amino-acid chain; its full sequence is Cysteine desulfurase IscS (404 aa).

Pyridoxal 5'-phosphate contacts are provided by residues 75 to 76, N155, Q183, and 203 to 205; these read AT and SGH. K206 bears the N6-(pyridoxal phosphate)lysine mark. Position 243 (T243) interacts with pyridoxal 5'-phosphate. C328 acts as the Cysteine persulfide intermediate in catalysis. C328 contributes to the [2Fe-2S] cluster binding site.

It belongs to the class-V pyridoxal-phosphate-dependent aminotransferase family. NifS/IscS subfamily. As to quaternary structure, homodimer. Forms a heterotetramer with IscU, interacts with other sulfur acceptors. Requires pyridoxal 5'-phosphate as cofactor.

The protein localises to the cytoplasm. The enzyme catalyses (sulfur carrier)-H + L-cysteine = (sulfur carrier)-SH + L-alanine. Its pathway is cofactor biosynthesis; iron-sulfur cluster biosynthesis. Master enzyme that delivers sulfur to a number of partners involved in Fe-S cluster assembly, tRNA modification or cofactor biosynthesis. Catalyzes the removal of elemental sulfur and selenium atoms from cysteine and selenocysteine to produce alanine. Functions as a sulfur delivery protein for Fe-S cluster synthesis onto IscU, an Fe-S scaffold assembly protein, as well as other S acceptor proteins. Also functions as a selenium delivery protein in the pathway for the biosynthesis of selenophosphate. The chain is Cysteine desulfurase IscS from Escherichia coli (strain K12 / DH10B).